Reading from the N-terminus, the 965-residue chain is Serine/threonine-protein kinase tousled-like 1 (965 aa).

Disordered regions lie at residues 1-22 (MSMLSMDGIVAGGGSSSGGGER), 35-72 (PQNKALPTVQSSGSSSNHAPIVGESPLGTVSSTMATGD), 95-120 (QNSSHPSTSVMMQQVPPQNGGATRSS), 172-292 (NHQQ…KQER), 320-402 (QNQG…QSGR), and 538-576 (RKPLGIGKEPKRPQAVNSQNDSNGMQPSTSSNTNGDDAI). A compositionally biased stretch (gly residues) spans 10-21 (VAGGGSSSGGGE). Polar residues predominate over residues 42–52 (TVQSSGSSSNH). Residues 172-231 (NHQQQMQQMHYHQQQQQYQQQQAQHHQMYAPQIQQQQQQPQQQSQQQSAQQPQQSSAALQ) show a composition bias toward low complexity. 2 stretches are compositionally biased toward polar residues: residues 233–244 (VNESSNLSSAGS) and 320–341 (QNQGSPKRQPAVQQNGSNSYDS). Over residues 342-355 (QQQQPQMNQHEMQN) the composition is skewed to low complexity. Polar residues predominate over residues 365 to 381 (LGVNNRGTPTPTQQQHY). A compositionally biased stretch (low complexity) spans 382–401 (SSDSNSNSNQSPPGQGNQSG). The segment covering 552–572 (AVNSQNDSNGMQPSTSSNTNG) has biased composition (polar residues). Phosphoserine is present on serine 634. A Protein kinase domain is found at 651–928 (YLMLNLLGKG…VFELAKHELF (278 aa)). Residues 657-665 (LGKGGFSEV) and lysine 680 contribute to the ATP site. The Proton acceptor role is filled by aspartate 781.

The protein belongs to the protein kinase superfamily. Ser/Thr protein kinase family. As to quaternary structure, interacts with air-2. Autophosphorylates in vitro. Phosphorylation on Ser-634 by air-2 enhances catalytic activity.

The protein resides in the nucleus. The catalysed reaction is L-seryl-[protein] + ATP = O-phospho-L-seryl-[protein] + ADP + H(+). The enzyme catalyses L-threonyl-[protein] + ATP = O-phospho-L-threonyl-[protein] + ADP + H(+). Its function is as follows. Essential for appropriate transcription during embryonic development. May act during transcription elongation to activate the RNA polymerase II large subunit (ama-1) by phosphorylating the Ser-2 residues of the C-terminal domain 7-residue repeats. Does not phosphorylate histone H3. This Caenorhabditis elegans protein is Serine/threonine-protein kinase tousled-like 1 (tlk-1).